The primary structure comprises 278 residues: 3-methyl-2-oxobutanoate hydroxymethyltransferase (278 aa).

Mg(2+) contacts are provided by aspartate 43 and aspartate 82. 3-methyl-2-oxobutanoate is bound by residues 43-44, aspartate 82, and lysine 112; that span reads DS. Glutamate 114 provides a ligand contact to Mg(2+). Glutamate 181 serves as the catalytic Proton acceptor.

Belongs to the PanB family. Homodecamer; pentamer of dimers. Mg(2+) is required as a cofactor.

The protein localises to the cytoplasm. It carries out the reaction 3-methyl-2-oxobutanoate + (6R)-5,10-methylene-5,6,7,8-tetrahydrofolate + H2O = 2-dehydropantoate + (6S)-5,6,7,8-tetrahydrofolate. The protein operates within cofactor biosynthesis; (R)-pantothenate biosynthesis; (R)-pantoate from 3-methyl-2-oxobutanoate: step 1/2. Functionally, catalyzes the reversible reaction in which hydroxymethyl group from 5,10-methylenetetrahydrofolate is transferred onto alpha-ketoisovalerate to form ketopantoate. The protein is 3-methyl-2-oxobutanoate hydroxymethyltransferase of Bacillus cereus (strain G9842).